A 647-amino-acid polypeptide reads, in one-letter code: DNA mismatch repair protein MutL (647 aa).

The span at 387-400 (SAKPVHEATDEKAE) shows a compositional bias: basic and acidic residues. The interval 387–412 (SAKPVHEATDEKAEPQSTSVKFAERK) is disordered.

It belongs to the DNA mismatch repair MutL/HexB family.

This protein is involved in the repair of mismatches in DNA. It is required for dam-dependent methyl-directed DNA mismatch repair. May act as a 'molecular matchmaker', a protein that promotes the formation of a stable complex between two or more DNA-binding proteins in an ATP-dependent manner without itself being part of a final effector complex. This is DNA mismatch repair protein MutL from Streptococcus sanguinis (strain SK36).